The primary structure comprises 358 residues: Protein FAM187B (358 aa).

The first 17 residues, 1–17 (MLATLWLVGLSLPMLWA), serve as a signal peptide directing secretion. The Extracellular portion of the chain corresponds to 18–322 (QRLISCPYKN…DKADSVLRRL (305 aa)). Asn127 carries N-linked (GlcNAc...) asparagine glycosylation. A helical membrane pass occupies residues 323–343 (KLMVLSISVLAVGGLLCKVVF). Residues 344–358 (RPVCGKKRSQVLLVK) lie on the Cytoplasmic side of the membrane.

Belongs to the FAM187 family.

It is found in the membrane. In Mus musculus (Mouse), this protein is Protein FAM187B (Fam187b).